A 129-amino-acid polypeptide reads, in one-letter code: Prefoldin subunit 6 (129 aa).

Coiled-coil stretches lie at residues 6–26 (VRDL…IQKD) and 84–118 (IEYI…LQQR).

It belongs to the prefoldin subunit beta family. As to quaternary structure, heterohexamer of two PFD-alpha type and four PFD-beta type subunits forming prefoldin co-chaperone complex. Interacts with PFD2, PFD3, PFD4 and PFD5. Interacts with LSM8, a specific subunit of the LSM2-8 complex, which is a core component of the spliceosome. Binds to HSP90 to facilitate the formation of a larger complex made at least of HSP90, PFD6 and LSM8.

It localises to the cytoplasm. It is found in the nucleus. Binds specifically to cytosolic chaperonin (c-CPN) and transfers target proteins to it. Binds to nascent polypeptide chain and promotes folding in an environment in which there are many competing pathways for nonnative proteins. Together with other chaperonins, contribute to the regulation of gene expression by modulating the spliceosome function on pre-mRNA splicing post-transcriptionally by acting as a co-chaperone of Hsp90 to control levels of LSM8. Required for the biogenesis of tubulins and for subsequent microtubules (MTs) organization and dynamicity, but unable to associate with microtubules. Involved in the process leading to microtubules dissociation in response to gibberellic acid (GA) probably due to the DELLA proteins-mediated translocation of the prefoldin co-chaperone complex from the cytoplasm to the nucleus. Contributes to the GA-dependent regulation of PIN2 trafficking at the plasma membrane, thus influencing auxin flux. This Arabidopsis thaliana (Mouse-ear cress) protein is Prefoldin subunit 6.